Here is a 208-residue protein sequence, read N- to C-terminus: Methylthioribulose-1-phosphate dehydratase (208 aa).

H101 and H103 together coordinate Zn(2+).

Belongs to the aldolase class II family. MtnB subfamily. Zn(2+) is required as a cofactor.

The enzyme catalyses 5-(methylsulfanyl)-D-ribulose 1-phosphate = 5-methylsulfanyl-2,3-dioxopentyl phosphate + H2O. It functions in the pathway amino-acid biosynthesis; L-methionine biosynthesis via salvage pathway; L-methionine from S-methyl-5-thio-alpha-D-ribose 1-phosphate: step 2/6. Its function is as follows. Catalyzes the dehydration of methylthioribulose-1-phosphate (MTRu-1-P) into 2,3-diketo-5-methylthiopentyl-1-phosphate (DK-MTP-1-P). This chain is Methylthioribulose-1-phosphate dehydratase, found in Gluconobacter oxydans (strain 621H) (Gluconobacter suboxydans).